The chain runs to 153 residues: ORM1-like protein 1 (153 aa).

The Cytoplasmic segment spans residues 1-26 (MNVGVAHSEVNPNTRVMNSRGMWLTY). Helical transmembrane passes span 27-46 (ALGVGLLHIVLLSIPFFSVP) and 47-64 (VAWTLTNIIHNLGMYVFL). Residues 65-100 (HAVKGTPFETPDQGKARLLTHWEQLDYGVQFTSSRK) are Cytoplasmic-facing. The helical transmembrane segment at 101–121 (FFTISPIILYFLASFYTKYDP) threads the bilayer. Over 122–123 (TH) the chain is Extracellular. Residues 124-140 (FILNTASLLSVLIPKMP) traverse the membrane as a helical segment. The Cytoplasmic portion of the chain corresponds to 141–153 (QLHGVRIFGINKY).

Belongs to the ORM family. In terms of assembly, ceramide-sensitive subunit of the serine palmitoyltransferase (SPT) complex, which is also composed of SPTLC1, SPTLC2/3 and SPTSSA/B. Widely expressed. Expressed in adult and fetal heart, brain, lung, liver, skeletal muscle and kidney. Expressed in adult pancreas and placenta and in fetal spleen abd thymus. Expressed at intermediate level in pancreas, placenta and brain but low in skeletal muscle and lung.

The protein localises to the endoplasmic reticulum membrane. Functionally, plays an essential role in the homeostatic regulation of sphingolipid de novo biosynthesis by modulating the activity of the serine palmitoyltransferase (SPT) in response to ceramide levels. When complexed to SPT, the binding of ceramides to its N-terminus stabilizes a conformation that block SPT substrate entry, hence preventing SPT catalytic activity. Through this mechanism, maintains ceramide levels at sufficient concentrations for the production of complex sphingolipids, but which prevents the accumulation of ceramides to levels that trigger apoptosis. The polypeptide is ORM1-like protein 1 (ORMDL1) (Homo sapiens (Human)).